Reading from the N-terminus, the 115-residue chain is NADH-ubiquinone oxidoreductase chain 3 (115 aa).

The next 3 helical transmembrane spans lie at Leu4 to Leu24, Phe55 to Leu75, and Tyr83 to Ala103.

Belongs to the complex I subunit 3 family. As to quaternary structure, core subunit of respiratory chain NADH dehydrogenase (Complex I) which is composed of 45 different subunits. Interacts with TMEM186. Interacts with TMEM242.

It is found in the mitochondrion inner membrane. The catalysed reaction is a ubiquinone + NADH + 5 H(+)(in) = a ubiquinol + NAD(+) + 4 H(+)(out). In terms of biological role, core subunit of the mitochondrial membrane respiratory chain NADH dehydrogenase (Complex I) which catalyzes electron transfer from NADH through the respiratory chain, using ubiquinone as an electron acceptor. Essential for the catalytic activity of complex I. The polypeptide is NADH-ubiquinone oxidoreductase chain 3 (Peromyscus polionotus (Oldfield mouse)).